A 312-amino-acid chain; its full sequence is Olfactory receptor 5J2 (312 aa).

Over methionine 1 to alanine 25 the chain is Extracellular. Asparagine 5 carries an N-linked (GlcNAc...) asparagine glycan. Residues valine 26–isoleucine 46 form a helical membrane-spanning segment. At leucine 47–lysine 54 the chain is on the cytoplasmic side. The helical transmembrane segment at leucine 55–serine 75 threads the bilayer. Residues alanine 76–valine 99 are Extracellular-facing. An intrachain disulfide couples cysteine 97 to cysteine 189. Residues glutamine 100–tyrosine 120 form a helical membrane-spanning segment. Over aspartate 121–arginine 139 the chain is Cytoplasmic. Residues lysine 140–threonine 160 form a helical membrane-spanning segment. At isoleucine 161–glutamate 196 the chain is on the extracellular side. A helical transmembrane segment spans residues leucine 197–serine 217. Residues tyrosine 218–alanine 237 are Cytoplasmic-facing. A helical transmembrane segment spans residues phenylalanine 238–serine 258. Residues tyrosine 259–glutamate 271 lie on the Extracellular side of the membrane. A helical transmembrane segment spans residues lysine 272–leucine 292. Residues arginine 293 to cysteine 312 are Cytoplasmic-facing.

This sequence belongs to the G-protein coupled receptor 1 family.

The protein resides in the cell membrane. Odorant receptor. This chain is Olfactory receptor 5J2 (OR5J2), found in Homo sapiens (Human).